Reading from the N-terminus, the 524-residue chain is Fusicoccadiene C-8 hydroxylase (524 aa).

A helical membrane pass occupies residues 16 to 36 (LQLLCIGPLVYACVSFIIKIV). Residues Asn126 and Asn344 are each glycosylated (N-linked (GlcNAc...) asparagine). Position 465 (Cys465) interacts with heme. The N-linked (GlcNAc...) asparagine glycan is linked to Asn496.

Belongs to the cytochrome P450 family. It depends on heme as a cofactor.

It localises to the membrane. Its pathway is mycotoxin biosynthesis. Its function is as follows. Cytochrome P450 monooxygenase; part of the 2 gene clusters that mediate the biosynthesis of fusicoccins, diterpene glucosides that display phytohormone-like activity and function as potent activators of plasma membrane H(+)-ATPases in plants by modifying 14-3-3 proteins and cause the plant disease constriction canker. The first step in the pathway is performed by the fusicoccadiene synthase PaFS that possesses both prenyl transferase and terpene cyclase activity, converting isopentenyl diphosphate and dimethylallyl diphosphate into geranylgeranyl diphosphate (GGDP) and successively converting GGDP into fusicocca-2,10(14)-diene, a precursor for fusicoccin H. The second step is the oxidation at the C-8 position by the cytochrome P450 monooxygenase PaP450-2 to yield fusicocca-2,10(14)-diene-8-beta-ol. The cytochrome P450 monooxygenase PaP450-1 then catalyzes the hydroxylation at the C-16 position to produce fusicocca-2,10(14)-diene-8-beta,16-diol. The dioxygenase fc-dox then catalyzes the 16-oxydation of fusicocca-2,10(14)-diene-8-beta,16-diol to yield an aldehyde (8-beta-hydroxyfusicocca-1,10(14)-dien-16-al). The short-chain dehydrogenase/reductase fc-sdr catalyzes the reduction of the aldehyde to yield fusicocca-1,10(14)-diene-8-beta,16-diol. The next step is the hydroxylation at C-9 performed by the cytochrome P450 monooxygenase PaP450-3 that leads to fusicoccin H aglycon which is glycosylated to fusicoccin H by the O-glycosyltransferase PaGT. Hydroxylation at C-12 by the cytochrome P450 monooxygenase PaP450-4 leads then to the production of fusicoccin Q and is followed by methylation by the O-methyltransferase PaMT to yield fusicoccin P. Fusicoccin P is further converted to fusicoccin J via prenylation by the O-glucose prenyltransferase PaPT. Cytochrome P450 monooxygenase PaP450-5 then performs hydroxylation at C-19 to yield dideacetyl-fusicoccin A which is acetylated to 3'-O-deacetyl-fusicoccin A by the O-acetyltransferase PaAT-2. Finally, a another acetylation by the O-acetyltransferase PaAT-1 yields fusicoccin A. The polypeptide is Fusicoccadiene C-8 hydroxylase (Phomopsis amygdali (Fusicoccum amygdali)).